The sequence spans 370 residues: A-type ATP synthase subunit C (370 aa).

It belongs to the V-ATPase V0D/AC39 subunit family. Has multiple subunits with at least A(3), B(3), C, D, E, F, H, I and proteolipid K(x).

The protein resides in the cell membrane. Component of the A-type ATP synthase that produces ATP from ADP in the presence of a proton gradient across the membrane. This Pyrococcus horikoshii (strain ATCC 700860 / DSM 12428 / JCM 9974 / NBRC 100139 / OT-3) protein is A-type ATP synthase subunit C.